A 339-amino-acid polypeptide reads, in one-letter code: Ornithine utilization regulator (339 aa).

Residues 241–338 (TRVRRLLLAR…GKLPSDYREA (98 aa)) form the HTH araC/xylS-type domain. 2 consecutive DNA-binding regions (H-T-H motif) follow at residues 258–279 (EQAA…SSLG) and 305–328 (LYEI…RKWT).

In terms of biological role, probably activates the ArgJ gene that encodes ornithine acetyltransferase. Binds to its own promoter-operator region. Probably binds ornithine. In Pseudomonas aeruginosa (strain ATCC 15692 / DSM 22644 / CIP 104116 / JCM 14847 / LMG 12228 / 1C / PRS 101 / PAO1), this protein is Ornithine utilization regulator (oruR).